Here is a 318-residue protein sequence, read N- to C-terminus: Protein W (318 aa).

Disordered stretches follow at residues 1 to 24 (MDQD…GRES) and 38 to 318 (SEPT…KKGA). Residues 7-20 (ISKEDSEVEREASG) show a composition bias toward basic and acidic residues. Residues 50 to 61 (LHNTINTLQRPG) are compositionally biased toward polar residues. Composition is skewed to basic and acidic residues over residues 99-110 (AEAHARNVDKQN) and 150-168 (GAED…RGED). Residues serine 249, serine 257, and serine 260 each carry the phosphoserine; by host modification.

The polypeptide is Protein W (P/V/C) (Sendai virus (strain Hamamatsu) (SeV)).